Reading from the N-terminus, the 66-residue chain is Large ribosomal subunit protein bL33c (66 aa).

Belongs to the bacterial ribosomal protein bL33 family.

Its subcellular location is the plastid. It localises to the chloroplast. The polypeptide is Large ribosomal subunit protein bL33c (Oenothera argillicola (Appalachian evening primrose)).